A 169-amino-acid chain; its full sequence is Peptide deformylase (169 aa).

Cys91 and His133 together coordinate Fe cation. The active site involves Glu134. His137 provides a ligand contact to Fe cation.

Belongs to the polypeptide deformylase family. The cofactor is Fe(2+).

It carries out the reaction N-terminal N-formyl-L-methionyl-[peptide] + H2O = N-terminal L-methionyl-[peptide] + formate. Its function is as follows. Removes the formyl group from the N-terminal Met of newly synthesized proteins. Requires at least a dipeptide for an efficient rate of reaction. N-terminal L-methionine is a prerequisite for activity but the enzyme has broad specificity at other positions. This chain is Peptide deformylase, found in Aliivibrio salmonicida (strain LFI1238) (Vibrio salmonicida (strain LFI1238)).